Consider the following 468-residue polypeptide: Putative BTB/POZ domain and WD-repeat protein R154 (468 aa).

The 72-residue stretch at 14-85 folds into the BTB domain; that stretch reads SDLQLIVEDS…FYGIDDKLPE (72 aa). WD repeat units lie at residues 194–233, 354–398, and 401–440; these read HHSE…IIFN, DEIG…LVKS, and LFDV…IIYT.

Belongs to the mimivirus BTB/WD family.

This chain is Putative BTB/POZ domain and WD-repeat protein R154, found in Acanthamoeba polyphaga (Amoeba).